The primary structure comprises 216 residues: Elongation factor Ts (216 aa).

The tract at residues threonine 81–valine 84 is involved in Mg(2+) ion dislocation from EF-Tu.

It belongs to the EF-Ts family.

The protein resides in the cytoplasm. Its function is as follows. Associates with the EF-Tu.GDP complex and induces the exchange of GDP to GTP. It remains bound to the aminoacyl-tRNA.EF-Tu.GTP complex up to the GTP hydrolysis stage on the ribosome. This Citrifermentans bemidjiense (strain ATCC BAA-1014 / DSM 16622 / JCM 12645 / Bem) (Geobacter bemidjiensis) protein is Elongation factor Ts.